Consider the following 1782-residue polypeptide: AF4/FMR2 family member lilli (1782 aa).

14 disordered regions span residues 42-84 (NMED…PSEG), 150-313 (ASSS…PPPE), 434-515 (MPTP…QQQQ), 605-637 (GGSSGSCMGTMSSSSSSNKTPSPTDSNRWNLSR), 691-732 (EKLH…QQRY), 768-820 (GALP…LQIP), 839-891 (KVQP…SNKK), 911-1064 (VAAA…AAAS), 1091-1126 (AGNSSSSSKAKRRYSVGSSSNSSSSSETEEQQQHKQ), 1166-1234 (LPQS…KQGQ), 1296-1327 (ARQHHHQPERLKAQQNGHLSSRSAEGARTPKD), 1386-1420 (LKQELPARRRKRSSSSSSSPYKEKKRKKEKAEQLS), 1450-1484 (QESAANGSPNKLQQQQQQSRLSQSQQQQQQQQQQQ), and 1674-1701 (GNTPSSISPSNSVGSQGSGSNTPPGKIV). Residues 54-80 (REKYERQQGIQSDDRETSLFGEPRRLN) are compositionally biased toward basic and acidic residues. Low complexity-rich tracts occupy residues 164-180 (QQQQQQQQQQQHYQQQQ) and 211-260 (PSSS…MSSP). The segment covering 435–447 (PTPPKASPTPPAI) has biased composition (pro residues). Phosphothreonine is present on T443. Residues 450–463 (MKTEKNHSLEKQDS) show a composition bias toward basic and acidic residues. Residues 465-475 (LENDLELSESD) show a composition bias toward acidic residues. 2 positions are modified to phosphoserine: S472 and S474. Low complexity-rich tracts occupy residues 484–515 (SAGNSSNSSESDSSESGSEASSKGDTQQQQQQ) and 609–622 (GSCMGTMSSSSSSN). Over residues 623–634 (KTPSPTDSNRWN) the composition is skewed to polar residues. Residues 691 to 701 (EKLHDEPRHVG) are compositionally biased toward basic and acidic residues. 2 stretches are compositionally biased toward low complexity: residues 714–730 (QQQQQQQQQQQQQQQQQ) and 782–805 (SDSGSASSGSGSGSSSSDSAGGSS). Positions 859–869 (PRQKKPRKKKM) are enriched in basic residues. Residues S878 and S879 each carry the phosphoserine modification. Positions 920–932 (KKGRGRPRKQAQQ) form a DNA-binding region, a.T hook. Low complexity predominate over residues 929 to 972 (QAQQQQQQQQQQLQQSGNLSSASASSSQAKGPTLTAAKKPLAKA). Phosphoserine is present on residues S949 and S951. Polar residues predominate over residues 973-982 (SVSNSNSTAP). Low complexity-rich tracts occupy residues 996–1018 (SNSSSNSNTPTKKPTATFATMAA), 1033–1064 (SSSSSCSSTKSSSSSGSDSETPAAAAAGAAAS), 1105–1116 (SVGSSSNSSSSS), and 1174–1196 (SSSDCSSSSNSDSSSNSSGSSSS). Residues 1308–1318 (AQQNGHLSSRS) show a composition bias toward polar residues. The segment covering 1450–1460 (QESAANGSPNK) has biased composition (polar residues). S1457 is modified (phosphoserine). Composition is skewed to low complexity over residues 1461 to 1484 (LQQQQQQSRLSQSQQQQQQQQQQQ) and 1674 to 1694 (GNTPSSISPSNSVGSQGSGSN).

Belongs to the AF4 family.

The protein resides in the nucleus. Functionally, has a role in transcriptional regulation. Acts in parallel with the Ras/MAPK and the PI3K/PKB pathways in the control of cell identity and cellular growth. Essential for regulation of the cytoskeleton and cell growth but not for cell proliferation or growth rate. Required specifically for the microtubule-based basal transport of lipid droplets. Plays a partially redundant function downstream of Raf in cell fate specification in the developing eye. Pair-rule protein that regulates embryonic cellularization, gastrulation and segmentation. The sequence is that of AF4/FMR2 family member lilli from Drosophila mojavensis (Fruit fly).